A 270-amino-acid chain; its full sequence is Putative phosphoenolpyruvate synthase regulatory protein (270 aa).

150-157 provides a ligand contact to ADP; that stretch reads GVSRCGKT.

The protein belongs to the pyruvate, phosphate/water dikinase regulatory protein family. PSRP subfamily.

It catalyses the reaction [pyruvate, water dikinase] + ADP = [pyruvate, water dikinase]-phosphate + AMP + H(+). It carries out the reaction [pyruvate, water dikinase]-phosphate + phosphate + H(+) = [pyruvate, water dikinase] + diphosphate. Functionally, bifunctional serine/threonine kinase and phosphorylase involved in the regulation of the phosphoenolpyruvate synthase (PEPS) by catalyzing its phosphorylation/dephosphorylation. This Shewanella sp. (strain ANA-3) protein is Putative phosphoenolpyruvate synthase regulatory protein.